Reading from the N-terminus, the 242-residue chain is Protein CDV3 homolog B (242 aa).

A compositionally biased stretch (basic and acidic residues) spans 1-15; that stretch reads MAEPEERSLDDFFAK. The tract at residues 1-242 is disordered; sequence MAEPEERSLD…DNQYAVLGEQ (242 aa). Ala-2 carries the post-translational modification N-acetylalanine. Positions 30–57 are enriched in low complexity; sequence AAGSRGPARPSDGATSSSLSSYVSAAGK. Residues 59-75 are compositionally biased toward basic and acidic residues; sequence VKKEKSGKSENPDQLQE. Over residues 105 to 122 the composition is skewed to acidic residues; the sequence is KEDDENENKEEQGADWEE. Polar residues-rich tracts occupy residues 129-143 and 183-194; these read DKSSGPWNKTAQAQA and SDTQFPSPQATA. The segment covering 195-213 has biased composition (basic and acidic residues); the sequence is KHTESRREKEMEKTFEIVK.

It belongs to the CDV3 family.

The protein localises to the cytoplasm. The chain is Protein CDV3 homolog B (cdv3-b) from Xenopus laevis (African clawed frog).